Here is a 443-residue protein sequence, read N- to C-terminus: BBSome complex member BBS5 homolog (443 aa).

This sequence belongs to the BBS5 family.

It is found in the cytoplasm. The protein localises to the cytoskeleton. The protein resides in the flagellum axoneme. This chain is BBSome complex member BBS5 homolog, found in Giardia intestinalis (strain ATCC 50803 / WB clone C6) (Giardia lamblia).